We begin with the raw amino-acid sequence, 600 residues long: MTSSLPVRAPSWVSSRRIFEERLQDLPKCANLNQVKQLHAQIIRRNLHEDLHIAPKLISALSLCRQTNLAVRVFNQVQEPNVHLCNSLIRAHAQNSQPYQAFFVFSEMQRFGLFADNFTYPFLLKACSGQSWLPVVKMMHNHIEKLGLSSDIYVPNALIDCYSRCGGLGVRDAMKLFEKMSERDTVSWNSMLGGLVKAGELRDARRLFDEMPQRDLISWNTMLDGYARCREMSKAFELFEKMPERNTVSWSTMVMGYSKAGDMEMARVMFDKMPLPAKNVVTWTIIIAGYAEKGLLKEADRLVDQMVASGLKFDAAAVISILAACTESGLLSLGMRIHSILKRSNLGSNAYVLNALLDMYAKCGNLKKAFDVFNDIPKKDLVSWNTMLHGLGVHGHGKEAIELFSRMRREGIRPDKVTFIAVLCSCNHAGLIDEGIDYFYSMEKVYDLVPQVEHYGCLVDLLGRVGRLKEAIKVVQTMPMEPNVVIWGALLGACRMHNEVDIAKEVLDNLVKLDPCDPGNYSLLSNIYAAAEDWEGVADIRSKMKSMGVEKPSGASSVELEDGIHEFTVFDKSHPKSDQIYQMLGSLIEPPDPGELVAVR.

13 PPR repeats span residues 50–80 (DLHI…VQEP), 81–115 (NVHL…GLFA), 116–150 (DNFT…GLSS), 151–183 (DIYV…MSER), 184–218 (DTVS…DLIS), 219–245 (WNTM…MPER), 246–276 (NTVS…MPLP), 279–313 (NVVT…GLKF), 314–348 (DAAA…NLGS), 349–379 (NAYV…IPKK), 380–414 (DLVS…GIRP), 415–445 (DKVT…MEKV), and 451–481 (QVEH…MPME). The type E motif stretch occupies residues 486 to 561 (IWGALLGACR…PSGASSVELE (76 aa)). The interval 562-592 (DGIHEFTVFDKSHPKSDQIYQMLGSLIEPPD) is type E(+) motif.

This sequence belongs to the PPR family. PCMP-E subfamily.

The chain is Pentatricopeptide repeat-containing protein At3g29230 (PCMP-E27) from Arabidopsis thaliana (Mouse-ear cress).